Consider the following 203-residue polypeptide: Small ribosomal subunit protein uS4 (203 aa).

The interval 1 to 46 is disordered; sequence MSKRQSAKYKLDRRMGENIWGRPKSPVNRREYGPGQHGQRRKGKMS. Positions 94–157 constitute an S4 RNA-binding domain; the sequence is RRLDAVVYRA…QEMALVAEAQ (64 aa).

It belongs to the universal ribosomal protein uS4 family. Part of the 30S ribosomal subunit. Contacts protein S5. The interaction surface between S4 and S5 is involved in control of translational fidelity.

Its function is as follows. One of the primary rRNA binding proteins, it binds directly to 16S rRNA where it nucleates assembly of the body of the 30S subunit. Functionally, with S5 and S12 plays an important role in translational accuracy. The sequence is that of Small ribosomal subunit protein uS4 from Sphingopyxis alaskensis (strain DSM 13593 / LMG 18877 / RB2256) (Sphingomonas alaskensis).